A 187-amino-acid chain; its full sequence is MTSFHHDDPERAVKVHVTQGESHVTADPNVVMTTVLGSCIAACIRDPQSGVGGMNHFLLPDSGDGRRDGDAVRYGAYAMEVLINDLLKRGARRERLEAKIFGGAKLFDGLSDVGASNAAFAERFLRDEGIPIVSSSTGGVSARRVEFWPASGRVRQRLVAVDNAPQDVRRPTPPPMPAVASGDVDLF.

Positions 164 to 187 (APQDVRRPTPPPMPAVASGDVDLF) are disordered.

The protein belongs to the CheD family.

The enzyme catalyses L-glutaminyl-[protein] + H2O = L-glutamyl-[protein] + NH4(+). Probably deamidates glutamine residues to glutamate on methyl-accepting chemotaxis receptors (MCPs), playing an important role in chemotaxis. The sequence is that of Probable chemoreceptor glutamine deamidase CheD from Caulobacter vibrioides (strain ATCC 19089 / CIP 103742 / CB 15) (Caulobacter crescentus).